The primary structure comprises 502 residues: Probable cytochrome P450 514A4 (502 aa).

The helical transmembrane segment at 4 to 24 (IFTIILTITILVLSLILKDLL) threads the bilayer. Cys448 provides a ligand contact to heme.

This sequence belongs to the cytochrome P450 family. It depends on heme as a cofactor.

It is found in the membrane. The sequence is that of Probable cytochrome P450 514A4 (cyp514A4) from Dictyostelium discoideum (Social amoeba).